The following is a 113-amino-acid chain: UPF0482 protein YnfB (113 aa).

An N-terminal signal peptide occupies residues 1-28; it reads MNNTLSKRLCLTAMLTLAAVVYTTSAFA.

It belongs to the UPF0482 family.

The sequence is that of UPF0482 protein YnfB from Salmonella agona (strain SL483).